Here is a 654-residue protein sequence, read N- to C-terminus: Coiled-coil domain-containing protein 30 (654 aa).

The interval 38–65 is disordered; that stretch reads TLESRRDPNSSLQKEFPQHQDEDQSRAA. Positions 53 to 62 are enriched in basic and acidic residues; it reads FPQHQDEDQS. Coiled coils occupy residues 97-244 and 276-559; these read REER…LDNA and KSQQ…QIIR. The interval 614 to 654 is disordered; that stretch reads AAAIPKSPEPLSRSQDSESGYINVTSLKETHNTQGDQKPEL. Positions 625 to 654 are enriched in polar residues; the sequence is SRSQDSESGYINVTSLKETHNTQGDQKPEL.

The protein belongs to the prefoldin subunit beta family.

This chain is Coiled-coil domain-containing protein 30 (Ccdc30), found in Mus musculus (Mouse).